A 628-amino-acid chain; its full sequence is Putative pentatricopeptide repeat-containing protein At3g13770, mitochondrial (628 aa).

The N-terminal 19 residues, 1–19, are a transit peptide targeting the mitochondrion; sequence MFNLMRLIHRSFSSSPTNY. PPR repeat units lie at residues 51–85, 86–116, 117–151, 152–186, 187–217, 218–252, 253–287, 288–318, 319–353, 355–389, and 392–422; these read GFHG…RYLP, ATYL…MPEK, NVVS…DGKP, NEFT…NYDS, HIFV…LPER, DVVS…GMSP, NYVT…ELPF, YAVL…MPER, TAIS…KRVK, DAVT…EYGT, and GTEH…MPSK. The interval 427-502 is type E motif; that stretch reads VLGSLLGACR…EPGRSWIQHE (76 aa). A type E(+) motif region spans residues 503-533; it reads QTLHYFHANDRTHPRREEVLAKMKEISIKMK. The segment at 534–628 is type DYW motif; sequence QAGYVPDLSC…DGICSCGDYW (95 aa).

This sequence belongs to the PPR family. PCMP-H subfamily.

It localises to the mitochondrion. The chain is Putative pentatricopeptide repeat-containing protein At3g13770, mitochondrial (PCMP-H85) from Arabidopsis thaliana (Mouse-ear cress).